The chain runs to 1513 residues: Mucin-2 (1513 aa).

An N-terminal signal peptide occupies residues 1 to 20 (MGLPLARLVAVCLVLALAKG). One can recognise a VWFD 1 domain in the interval 32 to 204 (HVCSTWGDFH…KINKPEVVCE (173 aa)). Intrachain disulfides connect C34-C166, C56-C203, C64-C163, C215-C252, C222-C247, C234-C272, C254-C260, C262-C288, C292-C326, C309-C348, C328-C342, C350-C372, C367-C384, C370-C379, C388-C525, C410-C560, C432-C440, C571-C616, C585-C611, C598-C636, C618-C624, C626-C651, C658-C695, C671-C685, C675-C715, C697-C709, C717-C739, and C737-C746. D46 contacts Ca(2+). Cu(+) contacts are provided by M143 and M151. E153 contributes to the Cu(2+) binding site. N-linked (GlcNAc...) asparagine glycosylation is present at N160. 3 residues coordinate Ca(2+): D168, N170, and E177. The Cu(2+) site is built by H274 and H321. In terms of domain architecture, TIL spans 292-348 (CPGNMVYLESGSPWLDTCSHLEVSSLCEEHYMDGCFCPEGTVYDDITGSGCIPVSQC). M323 is a Cu(+) binding site. The VWFC domain occupies 350–410 (CKLHGHLYMP…GKKFTFHGDC (61 aa)). The VWFD 2 domain occupies 386–561 (ETCALEGGSH…NTWKAQSSCH (176 aa)). A Ca(2+)-binding site is contributed by D400. An N-linked (GlcNAc...) asparagine glycan is attached at N420. N527, N529, L531, D534, and D535 together coordinate Ca(2+). N-linked (GlcNAc...) asparagine glycosylation occurs at N667. Residue N767 is glycosylated (N-linked (GlcNAc...) asparagine). 21 disulfide bridges follow: C781/C817, C799/C811, C819/C842, C836/C854, C840/C849, C858/C989, C880/C1024, C889/C986, C906/C913, C1034/C1077, C1048/C1072, C1059/C1099, C1079/C1087, C1089/C1114, C1105/C1134, C1118/C1160, C1142/C1184, C1164/C1178, C1186/C1210, C1205/C1235, and C1208/C1218. N-linked (GlcNAc...) asparagine glycosylation occurs at N837. The region spanning 856 to 1025 (STCSIYGSGH…NSWKEASTCP (170 aa)) is the VWFD 3 domain. D870 contributes to the Ca(2+) binding site. N-linked (GlcNAc...) asparagine glycosylation occurs at N892. Positions 991, 993, 998, and 999 each coordinate Ca(2+). N-linked (GlcNAc...) asparagine glycans are attached at residues N1136 and N1151. N-linked (GlcNAc...) asparagine glycosylation is found at N1212, N1227, and N1243. Residues T1264, T1267, T1268, and T1280 are each glycosylated (O-linked (GalNAc) threonine). O-linked (GalNAc) serine glycosylation occurs at S1286. The O-linked (GalNAc) threonine glycan is linked to T1290. Residues N1303, H1306, S1309, G1313, D1314, and E1316 each coordinate Ca(2+). N-linked (GlcNAc...) asparagine glycosylation is present at N1350. 2 residues coordinate Ca(2+): D1373 and Y1374. 11 tandem repeats follow at residues 1392–1407 (SPTT…QPTS), 1408–1423 (SPTT…SSAT), 1424–1434 (SPTTSHITSTV), 1435–1445 (SPTTSPTTSTT), 1446–1456 (SPTTSPTTSTT), 1457–1467 (SPTTSTTSPTP), 1468–1478 (SPTTSTTSPTP), 1479–1489 (SPTTSTTSPTP), 1490–1500 (SPTTSTTSPTT), 1501–1511 (SPITSPTTSTT), and 1512–1513 (SP). Positions 1392 to 1513 (SPTTSTPISS…TSPTTSTTSP (122 aa)) are approximate repeats. The interval 1392-1513 (SPTTSTPISS…TSPTTSTTSP (122 aa)) is disordered.

In terms of assembly, homomultimer; disulfide-linked. The N- and C-terminus mediate their assembly into higher order structures to form filaments. The CTCK domains of two polypeptides associate in the endoplasmic reticulum to generate intermolecularly disulfide-bonded dimers. These dimers progress to the Golgi apparatus, which is a more acidic environment than the endoplasmic reticulum. Under acidic conditions, the N-termini form non-covalent intermolecular interactions that juxtapose assemblies of the third VWD domain (VWD3) from different CTCK-linked dimers. The VWD3 assemblies then become disulfide bonded to one another to produce long, disulfide-linked polymers that remain highly compact until secretion. Interacts with FCGBP. Interacts with AGR2; disulfide-linked. In terms of processing, O-glycosylated. O-glycosylation is required for mucin assembly. Goblet cells synthesize two forms of mucin that differ in branched chain O-glycosylation and the site of production in the colon. May undergo proteolytic cleavage in the outer mucus layer of the colon, contributing to the expanded volume and loose nature of this layer which allows for bacterial colonization in contrast to the inner mucus layer which is dense and devoid of bacteria. Post-translationally, at low pH of 6 and under, undergoes autocatalytic cleavage in vitro in the N-terminal region of the fourth VWD domain. It is likely that this also occurs in vivo and is triggered by the low pH of the late secretory pathway. As to expression, expressed in intestine and airway.

The protein resides in the secreted. In terms of biological role, coats the epithelia of the intestines and other mucus membrane-containing organs to provide a protective, lubricating barrier against particles and infectious agents at mucosal surfaces. Major constituent of the colon mucus, which is mainly formed by large polymeric networks of MUC2 secreted by goblet cells that cover the exposed surfaces of intestine. MUC2 networks form hydrogels that guard the underlying epithelium from pathogens and other hazardous matter entering from the outside world, while permitting nutrient absorption and gas exchange. Acts as a divalent copper chaperone that protects intestinal cells from copper toxicity and facilitates nutritional copper unptake into cells. Binds both Cu(2+) and its reduced form, Cu(1+), at two juxtaposed binding sites: Cu(2+), once reduced to Cu(1+) by vitamin C (ascorbate) or other dietary antioxidants, transits to the other binding site. MUC2-bound Cu(1+) is protected from oxidation in aerobic environments, and can be released for nutritional delivery to cells. Mucin gels store antimicrobial molecules that participate in innate immunity. Mucin glycoproteins also house and feed the microbiome, lubricate tissue surfaces, and may facilitate the removal of contaminants and waste products from the body. Goblet cells synthesize two forms of MUC2 mucin that differ in branched chain O-glycosylation and the site of production in the colon: a (1) 'thick' mucus that wraps the microbiota to form fecal pellets is produced in the proximal, ascending colon. 'Thick' mucus transits along the descending colon and is lubricated by a (2) 'thin' MUC2 mucus produced in the distal colon which adheres to the 'thick' mucus. The protein is Mucin-2 of Rattus norvegicus (Rat).